The sequence spans 259 residues: Acyl-[acyl-carrier-protein]--UDP-N-acetylglucosamine O-acyltransferase (259 aa).

Belongs to the transferase hexapeptide repeat family. LpxA subfamily. In terms of assembly, homotrimer.

The protein resides in the cytoplasm. The enzyme catalyses a (3R)-hydroxyacyl-[ACP] + UDP-N-acetyl-alpha-D-glucosamine = a UDP-3-O-[(3R)-3-hydroxyacyl]-N-acetyl-alpha-D-glucosamine + holo-[ACP]. It functions in the pathway glycolipid biosynthesis; lipid IV(A) biosynthesis; lipid IV(A) from (3R)-3-hydroxytetradecanoyl-[acyl-carrier-protein] and UDP-N-acetyl-alpha-D-glucosamine: step 1/6. Its function is as follows. Involved in the biosynthesis of lipid A, a phosphorylated glycolipid that anchors the lipopolysaccharide to the outer membrane of the cell. The protein is Acyl-[acyl-carrier-protein]--UDP-N-acetylglucosamine O-acyltransferase of Psychrobacter sp. (strain PRwf-1).